A 274-amino-acid chain; its full sequence is Nickel/cobalt efflux system RcnA (274 aa).

The Periplasmic segment spans residues M1 to N12. Residues A13 to H33 traverse the membrane as a helical segment. Residues S34–G56 lie on the Cytoplasmic side of the membrane. The helical transmembrane segment at L57–I77 threads the bilayer. The Periplasmic segment spans residues S78–A86. Residues E87–W107 traverse the membrane as a helical segment. At R108 to Q174 the chain is on the cytoplasmic side. Over residues H127–D137 the composition is skewed to basic and acidic residues. Residues H127–H153 form a disordered region. A helical membrane pass occupies residues I175–L195. At I196–L209 the chain is on the periplasmic side. The helical transmembrane segment at V210 to I230 threads the bilayer. Residues S231 to Y251 are Cytoplasmic-facing. The chain crosses the membrane as a helical span at residues F252–I272. Residues M273 to R274 lie on the Periplasmic side of the membrane.

Belongs to the NiCoT transporter (TC 2.A.52) family. RcnA subfamily.

It localises to the cell inner membrane. Functionally, efflux system for nickel and cobalt. The chain is Nickel/cobalt efflux system RcnA (rcnA) from Escherichia coli O6:K15:H31 (strain 536 / UPEC).